The primary structure comprises 1027 residues: Kinesin heavy chain isoform 5A (1027 aa).

Alanine 2 carries the post-translational modification N-acetylalanine. The Kinesin motor domain maps to 9–327 (SIKVLCRFRP…LMFGQRAKTI (319 aa)). 86 to 93 (GQTSSGKT) provides a ligand contact to ATP. The microtubule-binding stretch occupies residues 174–315 (VSSPEEILDV…PSSYNDAETK (142 aa)). The interval 271–361 (EGTKSYVPYR…KTKAQKETIA (91 aa)) is necessary for interaction with ZFYVE27. Positions 331-906 (ASVNLELTAE…VDRIKEAVRY (576 aa)) form a coiled coil. The interval 353 to 1027 (TKAQKETIAK…FPLHQETAAS (675 aa)) is interaction with BICD2. At threonine 397 the chain carries Phosphothreonine. Residues 906–937 (YKSSGKRGHSAQIAKPVRPGHYPASSPTNPYG) are disordered. The interval 907 to 1027 (KSSGKRGHSA…FPLHQETAAS (121 aa)) is globular.

This sequence belongs to the TRAFAC class myosin-kinesin ATPase superfamily. Kinesin family. Kinesin subfamily. In terms of assembly, oligomer composed of two heavy chains and two light chains. Interacts with GRIP1. Interacts with FMR1 (via C-terminus); this interaction is increased in a mGluR-dependent manner. Interacts with BORCS5. Interacts with ZFYVE27. Interacts with VAPA, VAPB, SURF4, RAB11A (GDP-bound form), RAB11B (GDP-bound form) and RTN3 in a ZFYVE27-dependent manner. Interacts with BICD2. Interacts with DTNB.

Its subcellular location is the cytoplasm. The protein localises to the perinuclear region. The protein resides in the cytoskeleton. It is found in the perikaryon. It carries out the reaction ATP + H2O + a kinesin associated with a microtubule at position (n) = ADP + phosphate a kinesin associated with a microtubule at position (n+1, toward the plus end).. Its function is as follows. Microtubule-dependent motor required for slow axonal transport of neurofilament proteins (NFH, NFM and NFL). Can induce formation of neurite-like membrane protrusions in non-neuronal cells in a ZFYVE27-dependent manner. The ZFYVE27-KIF5A complex contributes to the vesicular transport of VAPA, VAPB, SURF4, RAB11A, RAB11B and RTN3 proteins in neurons. Required for anterograde axonal transportation of MAPK8IP3/JIP3 which is essential for MAPK8IP3/JIP3 function in axon elongation. The chain is Kinesin heavy chain isoform 5A (Kif5a) from Mus musculus (Mouse).